We begin with the raw amino-acid sequence, 241 residues long: Large ribosomal subunit protein uL3 (241 aa).

Residue Q157 is modified to N5-methylglutamine.

This sequence belongs to the universal ribosomal protein uL3 family. Part of the 50S ribosomal subunit. Forms a cluster with proteins L14 and L19. In terms of processing, methylated by PrmB.

Functionally, one of the primary rRNA binding proteins, it binds directly near the 3'-end of the 23S rRNA, where it nucleates assembly of the 50S subunit. The chain is Large ribosomal subunit protein uL3 from Vesicomyosocius okutanii subsp. Calyptogena okutanii (strain HA).